Here is a 279-residue protein sequence, read N- to C-terminus: Four and a half LIM domains protein 2 (279 aa).

The C4-type zinc-finger motif lies at 7–31; that stretch reads CHHCNESLFGKKYILREESPYCVVC. 3 consecutive LIM zinc-binding domains span residues 40–92, 101–153, and 162–212; these read CEEC…CTDC, CQEC…CVPC, and CVQC…CLNC. Lys-78 participates in a covalent cross-link: Glycyl lysine isopeptide (Lys-Gly) (interchain with G-Cter in SUMO2). Residues Lys-167 and Lys-220 each participate in a glycyl lysine isopeptide (Lys-Gly) (interchain with G-Cter in SUMO2) cross-link. The LIM zinc-binding 4 domain maps to 221-275; sequence CAGCTNPISGLGGTKYISFEERQWHNDCFNCKKCSLSLVGRGFLTERDDILCPDC. Residue Ser-238 is modified to Phosphoserine.

Interacts with ZNF638 and TTN/titin. Interacts with E4F1. Interacts with GRB7. Interacts with SIRT1 and FOXO1. Interacts with CEFIP. Interacts with calcineurin. Interacts with FOXK1. Expressed in skeletal muscle and heart.

It localises to the cytoplasm. It is found in the nucleus. The protein resides in the myofibril. Its subcellular location is the sarcomere. The protein localises to the z line. Functionally, may function as a molecular transmitter linking various signaling pathways to transcriptional regulation. Negatively regulates the transcriptional repressor E4F1 and may function in cell growth. Inhibits the transcriptional activity of FOXO1 and its apoptotic function by enhancing the interaction of FOXO1 with SIRT1 and FOXO1 deacetylation. Negatively regulates the calcineurin/NFAT signaling pathway in cardiomyocytes. This chain is Four and a half LIM domains protein 2 (FHL2), found in Homo sapiens (Human).